Here is a 178-residue protein sequence, read N- to C-terminus: NADH-quinone oxidoreductase subunit I 2 (178 aa).

4Fe-4S ferredoxin-type domains lie at 46–78 (IVLT…MQAA) and 88–117 (AWFR…LTPF). [4Fe-4S] cluster contacts are provided by cysteine 58, cysteine 61, cysteine 64, cysteine 68, cysteine 97, cysteine 100, cysteine 103, and cysteine 107.

This sequence belongs to the complex I 23 kDa subunit family. NDH-1 is composed of 14 different subunits. Subunits NuoA, H, J, K, L, M, N constitute the membrane sector of the complex. The cofactor is [4Fe-4S] cluster.

It localises to the cell inner membrane. The catalysed reaction is a quinone + NADH + 5 H(+)(in) = a quinol + NAD(+) + 4 H(+)(out). In terms of biological role, NDH-1 shuttles electrons from NADH, via FMN and iron-sulfur (Fe-S) centers, to quinones in the respiratory chain. The immediate electron acceptor for the enzyme in this species is believed to be ubiquinone. Couples the redox reaction to proton translocation (for every two electrons transferred, four hydrogen ions are translocated across the cytoplasmic membrane), and thus conserves the redox energy in a proton gradient. The protein is NADH-quinone oxidoreductase subunit I 2 of Syntrophobacter fumaroxidans (strain DSM 10017 / MPOB).